A 289-amino-acid polypeptide reads, in one-letter code: ATP synthase subunit a (289 aa).

A run of 6 helical transmembrane segments spans residues 43–63 (AFHV…VLIF), 101–121 (SAVI…MNAV), 160–180 (LSVF…GGFI), 193–213 (LFVQ…TLIA), 232–252 (VFIL…GLGV), and 259–279 (AVFH…LTIV).

The protein belongs to the ATPase A chain family. As to quaternary structure, F-type ATPases have 2 components, CF(1) - the catalytic core - and CF(0) - the membrane proton channel. CF(1) has five subunits: alpha(3), beta(3), gamma(1), delta(1), epsilon(1). CF(0) has three main subunits: a(1), b(2) and c(9-12). The alpha and beta chains form an alternating ring which encloses part of the gamma chain. CF(1) is attached to CF(0) by a central stalk formed by the gamma and epsilon chains, while a peripheral stalk is formed by the delta and b chains.

It localises to the cell inner membrane. Its function is as follows. Key component of the proton channel; it plays a direct role in the translocation of protons across the membrane. The protein is ATP synthase subunit a of Pseudomonas savastanoi pv. phaseolicola (strain 1448A / Race 6) (Pseudomonas syringae pv. phaseolicola (strain 1448A / Race 6)).